Here is a 166-residue protein sequence, read N- to C-terminus: Cyclic pyranopterin monophosphate synthase (166 aa).

Residues 83–85 (LCH) and 121–122 (ME) contribute to the substrate site. Asp-136 is an active-site residue.

Belongs to the MoaC family. As to quaternary structure, homohexamer; trimer of dimers.

It catalyses the reaction (8S)-3',8-cyclo-7,8-dihydroguanosine 5'-triphosphate = cyclic pyranopterin phosphate + diphosphate. It functions in the pathway cofactor biosynthesis; molybdopterin biosynthesis. In terms of biological role, catalyzes the conversion of (8S)-3',8-cyclo-7,8-dihydroguanosine 5'-triphosphate to cyclic pyranopterin monophosphate (cPMP). The sequence is that of Cyclic pyranopterin monophosphate synthase from Syntrophobacter fumaroxidans (strain DSM 10017 / MPOB).